Reading from the N-terminus, the 153-residue chain is ORM1-like protein 1 (153 aa).

Topologically, residues 1-27 are cytoplasmic; sequence MNVGVAHSEVNPNTRVMNSRGIWLTYA. 2 helical membrane passes run 28-46 and 47-64; these read LGVGMLHIVLLSIPFFSVP and VVWTLTNVIHNFGMYVFM. The Cytoplasmic segment spans residues 65–105; the sequence is HAVKGTPFETPDQGKARLLTHWEQLDYGVQFTSSRKFFTIS. 2 consecutive transmembrane segments (helical) span residues 106 to 123 and 124 to 140; these read PIILYFLASFYTKYDTAH and FVINTASLLSVLIPKLP. The Cytoplasmic segment spans residues 141–153; the sequence is QLHGVRIFGINKY.

The protein belongs to the ORM family. Ceramide-sensitive subunit of the serine palmitoyltransferase (SPT) complex, which is also composed of SPTLC1, SPTLC2/3 and SPTSSA/B.

It localises to the endoplasmic reticulum membrane. Plays an essential role in the homeostatic regulation of sphingolipid de novo biosynthesis by modulating the activity of the serine palmitoyltransferase (SPT) in response to ceramide levels. When complexed to SPT, the binding of ceramides to its N-terminus stabilizes a conformation that block SPT substrate entry, hence preventing SPT catalytic activity. Through this mechanism, maintains ceramide levels at sufficient concentrations for the production of complex sphingolipids, but which prevents the accumulation of ceramides to levels that trigger apoptosis. The chain is ORM1-like protein 1 (ormdl1) from Danio rerio (Zebrafish).